Here is a 558-residue protein sequence, read N- to C-terminus: Protein S10 (558 aa).

The tract at residues 539 to 558 (SSNTSSHEHTQKIVLNKVTR) is disordered.

This chain is Protein S10 (S10), found in Avena sativa (Oat).